The primary structure comprises 648 residues: Macrolide export ATP-binding/permease protein MacB (648 aa).

The Cytoplasmic portion of the chain corresponds to 1 to 272 (MTPLLELKDI…RALAANKMRT (272 aa)). Residues 5–243 (LELKDIRRSY…TGGTEPVVNT (239 aa)) form the ABC transporter domain. 41–48 (GASGSGKS) provides a ligand contact to ATP. Residues 273 to 293 (LLTMLGIIIGIASVVSIVVVG) form a helical membrane-spanning segment. At 294 to 522 (DAAKQMVLAD…TVEKTTRTLQ (229 aa)) the chain is on the periplasmic side. The chain crosses the membrane as a helical span at residues 523–543 (LFLTLVAVISLVVGGIGVMNI). Residues 544–575 (MLVSVTERTREIGIRMAVGARASDVLQQFLIE) lie on the Cytoplasmic side of the membrane. A helical transmembrane segment spans residues 576–596 (AVLVCLVGGALGITLSLLIAF). At 597 to 610 (TLQLFLPGWEIGFS) the chain is on the periplasmic side. Residues 611–631 (PLALLLAFLCSTVTGILFGWL) traverse the membrane as a helical segment. The Cytoplasmic portion of the chain corresponds to 632 to 648 (PARNAARLDPVDALARE).

It belongs to the ABC transporter superfamily. Macrolide exporter (TC 3.A.1.122) family. Homodimer. Part of the tripartite efflux system MacAB-TolC, which is composed of an inner membrane transporter, MacB, a periplasmic membrane fusion protein, MacA, and an outer membrane component, TolC. The complex forms a large protein conduit and can translocate molecules across both the inner and outer membranes. Interacts with MacA.

It localises to the cell inner membrane. With respect to regulation, ATPase activity is stimulated by interaction with MacA and inhibited by vanadate. Functionally, part of the tripartite efflux system MacAB-TolC. MacB is a non-canonical ABC transporter that contains transmembrane domains (TMD), which form a pore in the inner membrane, and an ATP-binding domain (NBD), which is responsible for energy generation. When overexpressed, the system confers resistance against macrolides composed of 14- and 15-membered lactones but no or weak resistance against 16-membered ones. In addition, the system could also transport R-LPS or a similar glycolipid. This chain is Macrolide export ATP-binding/permease protein MacB, found in Escherichia coli (strain K12).